We begin with the raw amino-acid sequence, 370 residues long: METTEPGQADGEERMMDLRPRTRSNPEGAEDRRSSTGSLNSSLPSAPQPAVGSRVEGEGEAASSDSPPVSATAIAATASVPVAAVGNTTTTNTASLPAMSPAVKERPKPSQPTMPTQIPPSAELHLRAPRVNCPEKVIICLDLSEEMSLQKLESINGSKTNALNISQKMIEMFVRTKHKIDKRHEFALVVVNDDAMWLSGFTSDPRELCSCLYDLETNVCESFNLEDLFNVILQKIELPQMENIQTIPPPFVVRTLLVFSRHAGMLQFNPSDAVKKMLQSPYFFFDVVFLHNGTEEQTEDTSWKDVYASFCELDTKGMCYRFEVSLCGPAIELHNCMAKLLCHPLQRPFQSHASYSLLEDEDTLENEATV.

Disordered regions lie at residues 1–69 (METT…SPPV) and 90–126 (TTNT…ELHL). Basic and acidic residues predominate over residues 11-20 (GEERMMDLRP). Over residues 35 to 45 (STGSLNSSLPS) the composition is skewed to low complexity. The VWFA-like stretch occupies residues 137–340 (VIICLDLSEE…IELHNCMAKL (204 aa)).

Belongs to the BABAM1 family. Component of the ARISC complex, at least composed of uimc1/rap80, abraxas1, brcc3/brcc36, babam2 and babam1/nba1. Component of the BRCA1-A complex, at least composed of bard1, uimc1/rap80, abraxas1, brcc3/brcc36, babam2 and babam1/nba1. In the BRCA1-A complex, interacts directly with abraxas1 and babam2. Component of the BRISC complex, at least composed of abraxas2, brcc3/brcc36, babam2 and babam1/nba1.

The protein resides in the cytoplasm. It is found in the nucleus. Component of the BRCA1-A complex, a complex that specifically recognizes 'Lys-63'-linked ubiquitinated histones H2A and H2AX at DNA lesion sites. The BRCA1-A complex also possesses deubiquitinase activity that specifically removes 'Lys-63'-linked ubiquitin on histones H2A and H2AX. In the BRCA1-A complex, it is required for the complex integrity and its localization at DNA double-strand breaks (DSBs). Component of the BRISC complex, a multiprotein complex that specifically cleaves 'Lys-63'-linked ubiquitin in various substrates. In these 2 complexes, it is probably required to maintain the stability of babam2 and help the 'Lys-63'-linked deubiquitinase activity mediated by brcc3/brcc36 component. The BRISC complex is required for normal mitotic spindle assembly and microtubule attachment to kinetochores via its role in deubiquitinating numa1. This Danio rerio (Zebrafish) protein is BRISC and BRCA1-A complex member 1 (babam1).